A 236-amino-acid polypeptide reads, in one-letter code: 7-cyano-7-deazaguanine synthase (236 aa).

An ATP-binding site is contributed by 7–17 (CSGGLDSVSLA). Residues C185, C193, C196, and C199 each contribute to the Zn(2+) site.

Belongs to the QueC family. The cofactor is Zn(2+).

The enzyme catalyses 7-carboxy-7-deazaguanine + NH4(+) + ATP = 7-cyano-7-deazaguanine + ADP + phosphate + H2O + H(+). The protein operates within purine metabolism; 7-cyano-7-deazaguanine biosynthesis. Catalyzes the ATP-dependent conversion of 7-carboxy-7-deazaguanine (CDG) to 7-cyano-7-deazaguanine (preQ(0)). The chain is 7-cyano-7-deazaguanine synthase from Rhizobium rhizogenes (strain K84 / ATCC BAA-868) (Agrobacterium radiobacter).